The sequence spans 370 residues: Gap junction delta-4 protein (370 aa).

Over 1-19 (MEGVDLLGFLIITLNCNVT) the chain is Cytoplasmic. The helical transmembrane segment at 20–40 (MXGKLWFVLTMLLRMLVIVLA) threads the bilayer. Residues 41 to 76 (GRPVYQDEQERFVCNTLQPGCANVCYDVFSPVSHLR) are Extracellular-facing. Residues 77-97 (FWLIQGVCVLLPSAVFSVYVL) traverse the membrane as a helical segment. The Cytoplasmic segment spans residues 98–146 (HRGATLAALGPRRCPEPRDTASGQRRCPGSCRERGGLEVPDFSAGYIIH). The chain crosses the membrane as a helical span at residues 147–167 (LLLRTLLEAAFGALNYLLFGF). Topologically, residues 168 to 196 (LAPNKFPCTRPPCTGVVDCYVSRPTEKSL) are extracellular. A helical membrane pass occupies residues 197 to 217 (LMLFLWAVSALSFLLGLADLV). Residues 218-370 (CSLRRLMRRR…HLRARKSEWV (153 aa)) are Cytoplasmic-facing. Positions 227 to 370 (RPGPPTSPSI…HLRARKSEWV (144 aa)) are disordered. A compositionally biased stretch (basic and acidic residues) spans 246–260 (PEGRPTDKEGGREQE). The segment covering 331-345 (PSAAPSHLAAHPSCS) has biased composition (low complexity).

Belongs to the connexin family. Delta-type subfamily. In terms of assembly, a connexon is composed of a hexamer of connexins.

It is found in the cell membrane. Its subcellular location is the cell junction. The protein localises to the gap junction. In terms of biological role, one gap junction consists of a cluster of closely packed pairs of transmembrane channels, the connexons, through which materials of low MW diffuse from one cell to a neighboring cell. This is Gap junction delta-4 protein (GJD4) from Macaca fascicularis (Crab-eating macaque).